Reading from the N-terminus, the 363-residue chain is mRNA decay activator protein ZFP36L2-A (363 aa).

Positions 131-136 match the RNA-binding motif; it reads RYKTEL. 2 C3H1-type zinc fingers span residues 131–159 and 169–197; these read RYKT…HGFH and KYKT…HNAE. Residues 148 to 189 form an RNA-binding region; sequence YGEKCQFAHGFHELRSLTRHPKYKTELCRTFHTIGFCPYGPR. Residues 308 to 349 are disordered; it reads ESPVFDAPPSPPDSLSDRDSYLSGSLSSGSLSGSDSPTLDSN. Residues 328–347 are compositionally biased toward low complexity; sequence YLSGSLSSGSLSGSDSPTLD.

In terms of processing, phosphorylated. As to expression, widely expressed in adults.

The protein resides in the nucleus. It is found in the cytoplasm. Its function is as follows. Zinc-finger RNA-binding protein that destabilizes several cytoplasmic AU-rich element (ARE)-containing mRNA transcripts by promoting their poly(A) tail removal or deadenylation, and hence provide a mechanism for attenuating protein synthesis. Acts as a 3'-untranslated region (UTR) ARE mRNA-binding adapter protein to communicate signaling events to the mRNA decay machinery. Functions by recruiting the CCR4-NOT deadenylase complex and probably other components of the cytoplasmic RNA decay machinery to the bound ARE-containing mRNAs, and hence promotes ARE-mediated mRNA deadenylation and decay processes. Binds to 3'-UTR ARE of numerous mRNAs. Also induces the degradation of ARE-containing mRNAs even in absence of poly(A) tail. Required for tubulogenesis during pronephros development. This Xenopus laevis (African clawed frog) protein is mRNA decay activator protein ZFP36L2-A (zfp36l2-A).